The primary structure comprises 521 residues: 2,3-bisphosphoglycerate-independent phosphoglycerate mutase (521 aa).

Aspartate 18 and serine 68 together coordinate Mn(2+). The active-site Phosphoserine intermediate is the serine 68. Residues histidine 129, 158-159, arginine 190, arginine 196, 266-269, and lysine 343 each bind substrate; these read RD and RSDR. Positions 410, 414, 451, 452, and 470 each coordinate Mn(2+).

Belongs to the BPG-independent phosphoglycerate mutase family. In terms of assembly, monomer. Mn(2+) serves as cofactor.

It carries out the reaction (2R)-2-phosphoglycerate = (2R)-3-phosphoglycerate. The protein operates within carbohydrate degradation; glycolysis; pyruvate from D-glyceraldehyde 3-phosphate: step 3/5. Catalyzes the interconversion of 2-phosphoglycerate and 3-phosphoglycerate. This chain is 2,3-bisphosphoglycerate-independent phosphoglycerate mutase, found in Hydrogenovibrio crunogenus (strain DSM 25203 / XCL-2) (Thiomicrospira crunogena).